The sequence spans 388 residues: Succinate--CoA ligase [ADP-forming] subunit beta (388 aa).

Residues 9-244 form the ATP-grasp domain; it reads KGILSGFDVR…PHEYSEEELE (236 aa). ATP contacts are provided by residues lysine 46, 53-55, glutamate 99, valine 102, and glutamate 107; that span reads GRG. The Mg(2+) site is built by asparagine 199 and aspartate 213. Substrate contacts are provided by residues asparagine 264 and 320–322; that span reads GIM.

It belongs to the succinate/malate CoA ligase beta subunit family. Heterotetramer of two alpha and two beta subunits. Mg(2+) is required as a cofactor.

The enzyme catalyses succinate + ATP + CoA = succinyl-CoA + ADP + phosphate. The catalysed reaction is GTP + succinate + CoA = succinyl-CoA + GDP + phosphate. It participates in carbohydrate metabolism; tricarboxylic acid cycle; succinate from succinyl-CoA (ligase route): step 1/1. In terms of biological role, succinyl-CoA synthetase functions in the citric acid cycle (TCA), coupling the hydrolysis of succinyl-CoA to the synthesis of either ATP or GTP and thus represents the only step of substrate-level phosphorylation in the TCA. The beta subunit provides nucleotide specificity of the enzyme and binds the substrate succinate, while the binding sites for coenzyme A and phosphate are found in the alpha subunit. This Anaplasma phagocytophilum (strain HZ) protein is Succinate--CoA ligase [ADP-forming] subunit beta.